Reading from the N-terminus, the 280-residue chain is MINNLKTFILLASLTALLVVIGGLLGGSTGMLIALVFAGVMNFSAYWYSDVLVLKMYNAEPLPNNHFVNNIISELAHRAGTPVPKVYLINNSTPNAFATGRNPENASIAVTTGLLDRLTQEEITGVLAHELAHVIHRDTLINVVSATIAGAISGIANMFMWLSMFGHNSNNEEGVHPVVGMIMMIVAPLAAGLIQMAISRSREFEADAGGARISGNPQWLASALLKLDQANHEQYFDEAETHPSTAHLFIINPLNGEKLANLFSTHPSTAERVARLRAMY.

Transmembrane regions (helical) follow at residues T7–G26 and G30–S49. H129 is a Zn(2+) binding site. The active site involves E130. H133 contacts Zn(2+). Helical transmembrane passes span A146–G166 and V178–I198. E203 is a Zn(2+) binding site.

It belongs to the peptidase M48B family. It depends on Zn(2+) as a cofactor.

Its subcellular location is the cell inner membrane. In Legionella pneumophila subsp. pneumophila (strain Philadelphia 1 / ATCC 33152 / DSM 7513), this protein is Protease HtpX.